The following is a 463-amino-acid chain: MTSETRTLYSQLPAIDRLLHDSAFLSLRDRYGHTQVVDLLRRMLDDARDVIRNTQTLPDWYADWAQEAKLRLENAAQSALRPVINLTGTVLHTNLGRALQAQEAVEAVTQAMRAPVTLEYDLDGAGRGHRDRALATLLCRITGAEDACIVNNNAAAVLLMLAATASGKEVVVSRGELVEIGGAFRIPDVMRQAGCTLHEVGTTNRTHAKDYRQAVNENTGLLMKVHTSNYSIEGFTKTVEEAELAEIGRELDIPVVADLGSGSLVDLSQYGLPKEPMPQQLIAAGVSMVSFSGDKLLGGPQAGIIVGKKAMIAQLQSHPLKRALRADKMTLAALEATLRLYLHPEALAEKLPTLRLLTRSEASIREQAQRLQARLAARYGDEFALEVKPCLSQIGSGSLPVDRLPSAAMTFTPHDGRGSRLEALAARWRTLPVPVIGRIYDGRLWLDMRCLEDESRFMEMMLK.

Lysine 295 carries the N6-(pyridoxal phosphate)lysine modification.

The protein belongs to the SelA family. Homodecamer; pentamer of dimers. Binds only one seryl-tRNA(Sec) per dimer. Pyridoxal 5'-phosphate is required as a cofactor.

The protein localises to the cytoplasm. It catalyses the reaction L-seryl-tRNA(Sec) + selenophosphate + H(+) = L-selenocysteinyl-tRNA(Sec) + phosphate. It functions in the pathway aminoacyl-tRNA biosynthesis; selenocysteinyl-tRNA(Sec) biosynthesis; selenocysteinyl-tRNA(Sec) from L-seryl-tRNA(Sec) (bacterial route): step 1/1. Functionally, converts seryl-tRNA(Sec) to selenocysteinyl-tRNA(Sec) required for selenoprotein biosynthesis. The sequence is that of L-seryl-tRNA(Sec) selenium transferase from Salmonella paratyphi B (strain ATCC BAA-1250 / SPB7).